The sequence spans 1138 residues: Mastermind-like protein 3 (1138 aa).

The segment covering 37 to 48 (PNSTPAAPSSNH) has biased composition (polar residues). Disordered stretches follow at residues 37 to 68 (PNSTPAAPSSNHPAAGGCGGSGGPGGGSAAVP), 119 to 148 (EQRAKKSGAGTGKQQHPSKPQQDAEAASAE), 169 to 188 (RSPLNGDQQNGACDGNFSPT), 207 to 237 (PSNMPLPSASPLHQLDLKPSLPLQNSGTHTP), 334 to 480 (EEKK…QRAK), and 503 to 547 (QQQQ…PQAF). A compositionally biased stretch (gly residues) spans 52–64 (GGCGGSGGPGGGS). Polar residues-rich tracts occupy residues 130-139 (GKQQHPSKPQ) and 173-188 (NGDQQNGACDGNFSPT). Polar residues-rich tracts occupy residues 343–359 (QPATETPLSQESASVKS) and 372–394 (GSPQARPSSSGPPFSTVSTATSL). The span at 395-411 (PSVASTPAAPNPASSPA) shows a compositional bias: low complexity. Positions 414–426 (AVQSPQTPNQAHT) are enriched in polar residues. Low complexity predominate over residues 467-480 (QLKQMAAQQQQRAK). Position 603 is an N6-acetyllysine (Lys-603). Disordered stretches follow at residues 615-662 (RMTP…PRAH), 691-721 (HGQEQHPVGLPRTTGPMQSSVPPGSGGMVSG), 968-991 (LQGMPGRTSGELGPFNNGASYPLQ), 1024-1084 (AAMG…SQAY), and 1090-1109 (QDVSYNYSGDGAGGSFPGLP). Over residues 633-649 (QQQQQQQQQQQQQQQQQ) the composition is skewed to low complexity. A compositionally biased stretch (polar residues) spans 1064-1084 (PPAQQQIPSGSFAPSSQSQAY).

This sequence belongs to the mastermind family. As to quaternary structure, interacts through its N-terminal region with the ankyrin repeat region of the Notch proteins NOTCH1, NOTCH2, NOTCH3 and NOTCH4. Forms a DNA-binding complex with Notch proteins and RBPSUH/RBP-J kappa.

Its subcellular location is the nucleus speckle. Functionally, acts as a transcriptional coactivator for NOTCH proteins. Has been shown to amplify NOTCH-induced transcription of HES1. The sequence is that of Mastermind-like protein 3 from Homo sapiens (Human).